A 38-amino-acid polypeptide reads, in one-letter code: Large ribosomal subunit protein bL36 (38 aa).

The protein belongs to the bacterial ribosomal protein bL36 family.

The protein is Large ribosomal subunit protein bL36 of Prochlorococcus marinus (strain SARG / CCMP1375 / SS120).